Consider the following 230-residue polypeptide: Large ribosomal subunit protein uL1 (230 aa).

The protein belongs to the universal ribosomal protein uL1 family. In terms of assembly, part of the 50S ribosomal subunit.

Binds directly to 23S rRNA. The L1 stalk is quite mobile in the ribosome, and is involved in E site tRNA release. Functionally, protein L1 is also a translational repressor protein, it controls the translation of the L11 operon by binding to its mRNA. This chain is Large ribosomal subunit protein uL1, found in Sulfurimonas denitrificans (strain ATCC 33889 / DSM 1251) (Thiomicrospira denitrificans (strain ATCC 33889 / DSM 1251)).